Reading from the N-terminus, the 70-residue chain is DNA gyrase inhibitor YacG (70 aa).

A compositionally biased stretch (basic and acidic residues) spans 1–15; sequence MPEDKKAAAKVEPLR. Residues 1 to 22 are disordered; sequence MPEDKKAAAKVEPLRKTRPCPE. Positions 20, 23, 35, and 39 each coordinate Zn(2+).

This sequence belongs to the DNA gyrase inhibitor YacG family. In terms of assembly, interacts with GyrB. It depends on Zn(2+) as a cofactor.

Its function is as follows. Inhibits all the catalytic activities of DNA gyrase by preventing its interaction with DNA. Acts by binding directly to the C-terminal domain of GyrB, which probably disrupts DNA binding by the gyrase. The chain is DNA gyrase inhibitor YacG from Rhizobium johnstonii (strain DSM 114642 / LMG 32736 / 3841) (Rhizobium leguminosarum bv. viciae).